A 186-amino-acid polypeptide reads, in one-letter code: Translation initiation factor IF-3 (186 aa).

This sequence belongs to the IF-3 family. Monomer.

It is found in the cytoplasm. Functionally, IF-3 binds to the 30S ribosomal subunit and shifts the equilibrium between 70S ribosomes and their 50S and 30S subunits in favor of the free subunits, thus enhancing the availability of 30S subunits on which protein synthesis initiation begins. This chain is Translation initiation factor IF-3, found in Chlamydia caviae (strain ATCC VR-813 / DSM 19441 / 03DC25 / GPIC) (Chlamydophila caviae).